The sequence spans 553 residues: MAAPDSLSHGPSGDSVCLQEEKVSAEMMLVDCLTNYQELVSFDDVIVDFTQEEWTSLNPDQRTLYREVMLENYKNLATVGYQLIKPSVISWLEQEEFSTGQKIVFPEWKIQLETQCSASQQELLRGNISNGMQTQTGSDTGRGLCDGTQYGDFFSELSPLRTVMKTRPAQDNYDSSQCRKDFLMLQRKKCAGEKLSEFNQSEETGAIPGKAYQKMATQEKCFECSDCGKSFMNQSHLQTHQRTHSGDKLYELNECGRSFINSRLAVLIETLNAKKPHRCKECGKGYRYPAYLNIHMRTHTGEKPYECKECGKAFNYSNSFQIHGRTHTGEKPYVCNQCGKAFTQHSGLSIHVRSHNGDKPYACKECGKAFLTSSRLIQHIRTHTGEKPFVCVKCGKAFAISSNLNGHLKMHAEEKTCECKICGKAFGYLSCLNNHMRTHNAKKSYTCKECGKAFNYSTHLKIHMRIHTGEKPYECKQCGKAFSHSTSFQIHERTHTGEKPYECKECGKAFICPSSFRIHEISHTHTEEKPYKCQQCGKAYSHPRSLRRHERIH.

The region spanning 40–111 (VSFDDVIVDF…KIVFPEWKIQ (72 aa)) is the KRAB domain. C2H2-type zinc fingers lie at residues 222 to 244 (FECS…QRTH), 277 to 299 (HRCK…MRTH), 305 to 327 (YECK…GRTH), 333 to 355 (YVCN…VRSH), 361 to 383 (YACK…IRTH), 389 to 411 (FVCV…LKMH), 417 to 439 (CECK…MRTH), 445 to 467 (YTCK…MRIH), 473 to 495 (YECK…ERTH), 501 to 525 (YECK…SHTH), and 531 to 553 (YKCQ…ERIH).

The protein resides in the nucleus. May be involved in transcriptional regulation. The chain is Zinc finger protein 426 (Znf426) from Rattus norvegicus (Rat).